The chain runs to 98 residues: MFEQRVNSDVLTVSTVNSQDQVTQKPLRDSVKQALKNYFAQLNGQDVNDLYELVLAEVEQPLLDMVMQYTRGNQTRAAQMMGINRGTLRKKLKKYGMN.

Residues 74–93 (QTRAAQMMGINRGTLRKKLK) constitute a DNA-binding region (H-T-H motif).

Belongs to the transcriptional regulatory Fis family. As to quaternary structure, homodimer.

Its function is as follows. Activates ribosomal RNA transcription. Plays a direct role in upstream activation of rRNA promoters. The polypeptide is DNA-binding protein Fis (Sodalis glossinidius (strain morsitans)).